A 240-amino-acid chain; its full sequence is Probable transcriptional regulatory protein MXAN_7062 (240 aa).

It belongs to the TACO1 family.

It localises to the cytoplasm. In Myxococcus xanthus (strain DK1622), this protein is Probable transcriptional regulatory protein MXAN_7062.